The following is a 378-amino-acid chain: Odorant receptor 45a (378 aa).

Residues 1-30 (MDASYFAVQRRALEIVGFDPSTPQLSLKHP) lie on the Cytoplasmic side of the membrane. A helical transmembrane segment spans residues 31–51 (IWAGILILSLISHNWPMVVYA). Topologically, residues 52 to 129 (LQDLSDLTRL…RYVARSFRNA (78 aa)) are extracellular. A helical membrane pass occupies residues 130–150 (AYGVICASAIAPMLLGLWGYV). The Cytoplasmic portion of the chain corresponds to 151-173 (ETGVFTPTTPMEFNFWLDERKPH). The chain crosses the membrane as a helical span at residues 174-194 (FYWPIYVWGVLGVAAAAWLAI). The Extracellular segment spans residues 195 to 197 (ATD). Residues 198–218 (TLFSWLTHNVVIQFQLLELVL) form a helical membrane-spanning segment. Residues 219–249 (EEKDLNGGDSRLTGFVSRHRIALDLAKELSS) lie on the Cytoplasmic side of the membrane. A helical transmembrane segment spans residues 250–270 (IFGEIVFVKYMLSYLQLCMLA). Residues 271-285 (FRFSRSGWSAQVPFR) lie on the Extracellular side of the membrane. A helical membrane pass occupies residues 286 to 306 (ATFLVAIIIQLSSYCYGGEYI). The Cytoplasmic portion of the chain corresponds to 307 to 342 (KQQSLAIAQAVYGQINWPEMTPKKRRLWQMVIMRAQ). A helical transmembrane segment spans residues 343–363 (RPAKIFGFMFVVDLPLLLWVI). Over 364–378 (RTAGSFLAMLRTFER) the chain is Extracellular.

Belongs to the insect chemoreceptor superfamily. Heteromeric odorant receptor channel (TC 1.A.69) family. Or1a subfamily. In terms of assembly, interacts with Orco. Complexes exist early in the endomembrane system in olfactory sensory neurons (OSNs), coupling these complexes to the conserved ciliary trafficking pathway.

Its subcellular location is the cell membrane. In terms of biological role, odorant receptor which mediates acceptance or avoidance behavior, depending on its substrates. The odorant receptor repertoire encodes a large collection of odor stimuli that vary widely in identity, intensity, and duration. May form a complex with Orco to form odorant-sensing units, providing sensitive and prolonged odorant signaling and calcium permeability. Involved in the behavioral responses to hexanol, pentyl acetate, benzyl acetate, and 2-heptanone. The sequence is that of Odorant receptor 45a (Or45a) from Drosophila melanogaster (Fruit fly).